Reading from the N-terminus, the 419-residue chain is RING finger protein 150 (419 aa).

An N-terminal signal peptide occupies residues 1 to 34 (MALSVIQACRSLALSTWLLSFCFVHLLCLDFTVA). Residues 35 to 197 (EKEEWYTAFV…NLQKYVSRTS (163 aa)) lie on the Extracellular side of the membrane. Positions 70-172 (SLKREARGVL…PKGRELVLLM (103 aa)) constitute a PA domain. Residues 198 to 218 (VVFVSISFIILMIISLAWLVF) traverse the membrane as a helical segment. The Cytoplasmic portion of the chain corresponds to 219–419 (YYIQRFRYAN…IDTPTDDPKC (201 aa)). An RING-type; atypical zinc finger spans residues 267–308 (CAVCIEGYKPNDVVRILPCRHLFHKCCVDPWLVDHRTCPMCK). The tract at residues 374-419 (SEPLSQDTMPTEQSELQPIASGSSDVSLTTGAGHSDIDTPTDDPKC) is disordered. The segment covering 376 to 405 (PLSQDTMPTEQSELQPIASGSSDVSLTTGA) has biased composition (polar residues).

Its subcellular location is the membrane. This chain is RING finger protein 150 (rnf150), found in Danio rerio (Zebrafish).